The chain runs to 179 residues: Large ribosomal subunit protein uL6 (179 aa).

Belongs to the universal ribosomal protein uL6 family. Part of the 50S ribosomal subunit.

In terms of biological role, this protein binds to the 23S rRNA, and is important in its secondary structure. It is located near the subunit interface in the base of the L7/L12 stalk, and near the tRNA binding site of the peptidyltransferase center. This Buchnera aphidicola subsp. Baizongia pistaciae (strain Bp) protein is Large ribosomal subunit protein uL6.